We begin with the raw amino-acid sequence, 260 residues long: Coiled-coil domain-containing protein 127 (260 aa).

The stretch at 49-135 (QKEVEKEREA…QVMQEKRQVQ (87 aa)) forms a coiled coil.

The chain is Coiled-coil domain-containing protein 127 (CCDC127) from Homo sapiens (Human).